We begin with the raw amino-acid sequence, 159 residues long: Ribosomal RNA large subunit methyltransferase H (159 aa).

S-adenosyl-L-methionine is bound by residues Gly-108 and 127-132; that span reads FSKMTF.

It belongs to the RNA methyltransferase RlmH family. In terms of assembly, homodimer.

The protein localises to the cytoplasm. It catalyses the reaction pseudouridine(1915) in 23S rRNA + S-adenosyl-L-methionine = N(3)-methylpseudouridine(1915) in 23S rRNA + S-adenosyl-L-homocysteine + H(+). Its function is as follows. Specifically methylates the pseudouridine at position 1915 (m3Psi1915) in 23S rRNA. This is Ribosomal RNA large subunit methyltransferase H from Clostridium perfringens (strain ATCC 13124 / DSM 756 / JCM 1290 / NCIMB 6125 / NCTC 8237 / Type A).